A 464-amino-acid polypeptide reads, in one-letter code: MTDPALIDELKTLVEPGKVLTDADSLNAYGKDWTKHFAPAPSAIVFPKSIEQVQAIVRWANAHKVALVPSGGRTGLSAAAVAANGEVVVSFDYMNQILEFNEMDRTAVCQPGVVTAQLQQFAEDKGLYYPVDFASAGSSQIGGNIGTNAGGIKVIRYGMTRNWVAGMKVVTGKGDLLELNKDLIKNATGYDLRQLFIGAEGTLGFVVEATMRLERQPTNLTALVLGTPDFDSIMPVLHAFQDKLDLTAFEFFSDKALAKVLGRGDVPAPFETDCPFYALLEFEATTEERAEQALATFEHCVEQGWVLDGVMSQSEQQLQNLWKLREYISETISHWTPYKNDISVTVGKVPAFLKEIDAIVGEHYPDFEIVWFGHIGDGNLHLNILKPDAMDKDEFFGKCATVNKWVFETVQKYNGSISAEHGVGMTKRDYLEYSRSPAEIEYMKAVKAVFDPNGIMNPGKIFAA.

The FAD-binding PCMH-type domain maps to 37–216 (FAPAPSAIVF…VEATMRLERQ (180 aa)). R325, S329, and K339 together coordinate (R)-2-hydroxyglutarate. (R)-malate is bound by residues R325, S329, and K339. Residues H374 and H381 each contribute to the Zn(2+) site. Residue N383 coordinates (R)-2-hydroxyglutarate. Residue E420 participates in Zn(2+) binding. H421 serves as a coordination point for (R)-2-hydroxyglutarate. (R)-malate is bound at residue H421.

The protein belongs to the FAD-binding oxidoreductase/transferase type 4 family. In terms of assembly, homodimer. The cofactor is FAD.

It catalyses the reaction (R)-2-hydroxyglutarate + A = 2-oxoglutarate + AH2. It carries out the reaction (R)-malate + A = oxaloacetate + AH2. With respect to regulation, activated by Zn(2+) ions at low concentrations (10 uM) and inhibited by Zn(2+), Fe(2+) and Ni(2+) at high concentrations (10 mM). Catalyzes the dehydrogenation of (R)-2-hydroxyglutarate (D-2-hydroxyglutarate or D-2-HG) to 2-oxoglutarate and of (R)-malate (D-malate) to oxaloacetate. Is functionally tied to L-serine biosynthesis, via its coupling with the D-3-phosphoglycerate dehydrogenase SerA, encoded by the adjacent gene in the locus. Is required for the utilization of D-2-hydroxyglutarate as well as D-malate as the sole carbon source for growth of P.stutzeri. Active in vitro with artificial electron acceptors such as 2,6-dichlorophenolindophenol (DCPIP) and appears to couple with electron transfer flavoprotein (ETF) for efficient oxidation of both D-2-hydroxyglutarate and D-malate in vivo. Cannot catalyze the oxidation of L-2-hydroxyglutarate, D-lactate, D-tartrate, D-2-hydroxybutanoate, D-mandelate, D-glycerate and D-phenyllactate. This is D-2-hydroxyglutarate dehydrogenase from Stutzerimonas stutzeri (strain A1501) (Pseudomonas stutzeri).